A 514-amino-acid chain; its full sequence is Cytochrome P450 monooxygenase FUS8 (514 aa).

The helical transmembrane segment at 24 to 44 (VFENLTVTNTVCAFIALFIIV) threads the bilayer. 2 N-linked (GlcNAc...) asparagine glycosylation sites follow: N225 and N443. A heme-binding site is contributed by C460.

The protein belongs to the cytochrome P450 family. It depends on heme as a cofactor.

It is found in the membrane. The protein operates within mycotoxin biosynthesis. Functionally, cytochrome P450 monooxygenase; part of the gene cluster that mediates the biosynthesis of the mycotoxin fusarin C. Within the cluster, FUS1, FUS2, FUS8 and FUS9 are sufficient for fusarin production. The roles of the other FUS members are yet undetermined. The fusarin C synthetase FUS1 is responsible for the condensation of one acetyl-coenzyme A (CoA) unit with six malonyl-CoA units and the amide linkage of the arising heptaketide and homoserine, subsequently releasing the first intermediate, prefusarin, as an alcohol with an open ring structure. The cytochrome P450 monooxygenase FUS8 participates in multiple oxidation processes at carbon C-20 and is able to use the FUS1 product as substrate, resulting in formation of 20-hydroxy-prefusarin. This reaction seems to be essential before the 2-pyrrolidone ring closure can be catalyzed by FUS2, generating 20-hydroxy-fusarin. FUS8 is able to further oxidizes carbon C-20 after ring closure, resulting in the formation of carboxy-fusarin C. As the last step, FUS9 methylates the hydroxyl group at C-21 to generate fusarin C. Fusarin C can then rearrange to epi-fusarin C, the (z)-isomers, and fusarin A and fusarin D. This Gibberella fujikuroi (strain CBS 195.34 / IMI 58289 / NRRL A-6831) (Bakanae and foot rot disease fungus) protein is Cytochrome P450 monooxygenase FUS8.